The following is a 263-amino-acid chain: Outer membrane protein OmpK (263 aa).

A signal peptide spans 1 to 20 (MRKSLLALSLLAATSAPVLA).

This sequence belongs to the nucleoside-specific channel-forming outer membrane porin (Tsx) (TC 1.B.10) family.

The protein localises to the cell outer membrane. Serves as receptor for a broad-host-range vibriophage, KVP40. The sequence is that of Outer membrane protein OmpK from Vibrio parahaemolyticus.